Reading from the N-terminus, the 794-residue chain is uncharacterized protein (794 aa).

A signal peptide spans 1–22; sequence MKFKYGAIVFSGLLGVSAILAA. A lipid anchor (N-palmitoyl cysteine) is attached at Cys23. The S-diacylglycerol cysteine moiety is linked to residue Cys23. Composition is skewed to polar residues over residues 182-200 and 245-261; these read TSVQ…NNGV and QMST…DANQ. Disordered regions lie at residues 182-208, 222-261, 474-529, 566-594, and 737-757; these read TSVQ…KIDK, NKAK…DANQ, FKIK…GKNG, SAAK…TEQK, and KNEK…RGKQ. Residues 475 to 501 show a composition bias toward low complexity; sequence KIKSSNKSKSSSSKSSTKAETGKTSGG. The span at 511–526 shows a compositional bias: polar residues; sequence GAQNQGKKGEGAQNQG. Positions 567–576 are enriched in basic and acidic residues; the sequence is AAKKEDKKSG. The span at 577–593 shows a compositional bias: polar residues; that stretch reads ESTTEQTQIQSKSVTEQ. Residues 737–751 are compositionally biased toward basic and acidic residues; sequence KNEKKEGSDQKDSKS.

The protein belongs to the MG185/MG260 family.

It is found in the cell membrane. This is an uncharacterized protein from Mycoplasma pneumoniae (strain ATCC 29342 / M129 / Subtype 1) (Mycoplasmoides pneumoniae).